Here is a 432-residue protein sequence, read N- to C-terminus: Adenylosuccinate synthetase (432 aa).

GTP contacts are provided by residues 13-19 and 41-43; these read GDEGKGK and GHT. D14 serves as the catalytic Proton acceptor. Positions 14 and 41 each coordinate Mg(2+). IMP is bound by residues 14–17, 39–42, T130, R144, Q225, T240, and R304; these read DEGK and NAGH. The active-site Proton donor is the H42. 300–306 contributes to the substrate binding site; sequence ATTGRRR. Residues R306, 332-334, and 415-417 contribute to the GTP site; these read KLD and STG.

It belongs to the adenylosuccinate synthetase family. In terms of assembly, homodimer. The cofactor is Mg(2+).

It localises to the cytoplasm. The enzyme catalyses IMP + L-aspartate + GTP = N(6)-(1,2-dicarboxyethyl)-AMP + GDP + phosphate + 2 H(+). The protein operates within purine metabolism; AMP biosynthesis via de novo pathway; AMP from IMP: step 1/2. Functionally, plays an important role in the de novo pathway of purine nucleotide biosynthesis. Catalyzes the first committed step in the biosynthesis of AMP from IMP. The sequence is that of Adenylosuccinate synthetase from Salmonella arizonae (strain ATCC BAA-731 / CDC346-86 / RSK2980).